We begin with the raw amino-acid sequence, 223 residues long: Putative PAN domain-containing protein R486 (223 aa).

A signal peptide spans 1–23 (MSQTAIIIWIVVIIILLVLGGLG). The interval 39–73 (PTPINPPSSITPIQPINPPSSITPIQPSGPPSGGN) is disordered. The span at 45–64 (PSSITPIQPINPPSSITPIQ) shows a compositional bias: low complexity. PAN domains follow at residues 80-155 (CPAY…EDGC) and 159-223 (ARYN…KMPH). Cystine bridges form between Cys-80–Cys-155 and Cys-109–Cys-131. Residues Asn-162, Asn-189, and Asn-213 are each glycosylated (N-linked (GlcNAc...) asparagine; by host). Residues Cys-182 and Cys-204 are joined by a disulfide bond.

The protein resides in the secreted. The protein localises to the virion. The protein is Putative PAN domain-containing protein R486 of Acanthamoeba polyphaga mimivirus (APMV).